The primary structure comprises 530 residues: Chaperone Ric-8A (530 aa).

Serine 435 is modified (phosphoserine). Phosphothreonine occurs at positions 440 and 442. A phosphoserine mark is found at serine 501, serine 522, serine 523, and serine 527.

It belongs to the synembryn family. As to quaternary structure, interacts with GDP-bound G alpha proteins GNAI1, GNAO1 and GNAQ, and with GNA13 with lower affinity. Does not interact with G-alpha proteins when they are in complex with subunits beta and gamma. Interacts (via C-terminus) with RGS14; the interaction stimulates the dissociation of the complex between RGS14 and the active GTP-bound form of GNAI1. Interacts with NCS1; interaction is favored in the absence of Ca(2+) and myristoylation of NCS1 is not required. Post-translationally, phosphorylated at Ser-435 and Thr-440 by CK2, stabilizing its interface with G alpha proteins.

It is found in the cytoplasm. Its subcellular location is the cell cortex. Functionally, chaperone that specifically binds and folds nascent G alpha proteins prior to G protein heterotrimer formation, promoting their stability and activity: folds GNAI1, GNAO1, GNA13 and GNAQ. Does not fold G(s) G-alpha proteins GNAS nor GNAL. Also acts as a guanine nucleotide exchange factor (GEF) for G alpha proteins by stimulating exchange of bound GDP for free GTP. Involved in regulation of microtubule pulling forces during mitotic movement of chromosomes by stimulating G(i)-alpha protein (GNAI1), possibly leading to release G(i)-alpha-GTP and NuMA proteins from the NuMA-GPSM2-G(i)-alpha-GDP complex. Also acts as an activator for G(q)-alpha (GNAQ) protein by enhancing the G(q)-coupled receptor-mediated ERK activation. In Macaca fascicularis (Crab-eating macaque), this protein is Chaperone Ric-8A (RIC8A).